The chain runs to 187 residues: Ribosome maturation factor RimM (187 aa).

The region spanning 95–178 is the PRC barrel domain; sequence DEDEFFYADL…GLVEDKDESL (84 aa).

It belongs to the RimM family. Binds ribosomal protein uS19.

Its subcellular location is the cytoplasm. In terms of biological role, an accessory protein needed during the final step in the assembly of 30S ribosomal subunit, possibly for assembly of the head region. Essential for efficient processing of 16S rRNA. May be needed both before and after RbfA during the maturation of 16S rRNA. It has affinity for free ribosomal 30S subunits but not for 70S ribosomes. The chain is Ribosome maturation factor RimM from Sinorhizobium fredii (strain NBRC 101917 / NGR234).